The chain runs to 86 residues: Large ribosomal subunit protein bL31B (86 aa).

The protein belongs to the bacterial ribosomal protein bL31 family. Type B subfamily. As to quaternary structure, part of the 50S ribosomal subunit.

In Cupriavidus metallidurans (strain ATCC 43123 / DSM 2839 / NBRC 102507 / CH34) (Ralstonia metallidurans), this protein is Large ribosomal subunit protein bL31B.